Consider the following 319-residue polypeptide: tRNA U34 carboxymethyltransferase (319 aa).

Residues lysine 88, tryptophan 102, lysine 107, glycine 126, leucine 176 to glutamate 177, methionine 192, tyrosine 196, and arginine 311 contribute to the carboxy-S-adenosyl-L-methionine site.

The protein belongs to the class I-like SAM-binding methyltransferase superfamily. CmoB family. In terms of assembly, homotetramer.

The catalysed reaction is carboxy-S-adenosyl-L-methionine + 5-hydroxyuridine(34) in tRNA = 5-carboxymethoxyuridine(34) in tRNA + S-adenosyl-L-homocysteine + H(+). In terms of biological role, catalyzes carboxymethyl transfer from carboxy-S-adenosyl-L-methionine (Cx-SAM) to 5-hydroxyuridine (ho5U) to form 5-carboxymethoxyuridine (cmo5U) at position 34 in tRNAs. The polypeptide is tRNA U34 carboxymethyltransferase (Pseudomonas savastanoi pv. phaseolicola (strain 1448A / Race 6) (Pseudomonas syringae pv. phaseolicola (strain 1448A / Race 6))).